The sequence spans 244 residues: MKRYLTIIYGAASYLVFLVAFGYAIGFVGDVVVPRTVDHAIAAPIGQAVVVNLVLLGVFAVQHSVMARQGFKRWWTRFVPPSIERSTYVLLASVALLLLYWQWRTMPAVIWDVRQPAGRVALWALFWLGWATVLTSTFMINHFELFGLRQVYLAWRGKPYTEIGFQAHLLYRWVRHPIMLGFVVAFWATPMMTAGHLLFAIGATGYILVALQFEERDLLAALGDQYRDYRREVSMLLPWPHRHT.

Helical transmembrane passes span 7–27, 41–61, 90–110, 120–140, and 181–201; these read IIYG…AIGF, IAAP…VFAV, LLAS…PAVI, VALW…TFMI, and GFVV…LFAI.

This sequence belongs to the nurim family.

It is found in the membrane. It carries out the reaction methanethiol + S-adenosyl-L-methionine = dimethyl sulfide + S-adenosyl-L-homocysteine + H(+). In terms of biological role, catalyzes the methylation of methanethiol (MeSH) to yield dimethylsulphide (DMS). The sequence is that of Methanethiol S-methyltransferase from Mycobacterium tuberculosis (strain ATCC 25618 / H37Rv).